We begin with the raw amino-acid sequence, 384 residues long: NAD(P) transhydrogenase subunit alpha part 1 (384 aa).

Residues 126–136 (PRISRAQSMDI) are RQD loop; involved in interaction with PntB. NAD(+) is bound by residues 127-129 (RIS), 132-135 (QSMD), 180-182 (VGV), 202-204 (DVR), Gly234, Gln247, and Leu266.

Belongs to the AlaDH/PNT family. In terms of assembly, heterotrimer of two alpha chains and a beta (PntB) chain; in Rhodospirillum, the alpha chain is made of two subunits (PntAA and PntAB) and forms a dimer.

It catalyses the reaction NAD(+) + NADPH + H(+)(in) = NADH + NADP(+) + H(+)(out). The transhydrogenation between NADH and NADP is coupled to respiration and ATP hydrolysis and functions as a proton pump across the membrane. This chain is NAD(P) transhydrogenase subunit alpha part 1 (pntAA), found in Rhodospirillum rubrum (strain ATCC 11170 / ATH 1.1.1 / DSM 467 / LMG 4362 / NCIMB 8255 / S1).